The primary structure comprises 112 residues: Mediator of RNA polymerase II transcription subunit 22 (112 aa).

A disordered region spans residues 83 to 112 (KPEDGGEGQLADELLDKIEDTSDGVDKETA). Residues 96–112 (LLDKIEDTSDGVDKETA) show a composition bias toward basic and acidic residues.

This sequence belongs to the Mediator complex subunit 22 family. As to quaternary structure, component of the Mediator complex.

The protein resides in the nucleus. Component of the Mediator complex, a coactivator involved in the regulated transcription of nearly all RNA polymerase II-dependent genes. Mediator functions as a bridge to convey information from gene-specific regulatory proteins to the basal RNA polymerase II transcription machinery. Mediator is recruited to promoters by direct interactions with regulatory proteins and serves as a scaffold for the assembly of a functional preinitiation complex with RNA polymerase II and the general transcription factors. The protein is Mediator of RNA polymerase II transcription subunit 22 (SRB6) of Yarrowia lipolytica (strain CLIB 122 / E 150) (Yeast).